A 1203-amino-acid polypeptide reads, in one-letter code: Probable phospholipid-transporting ATPase 11 (1203 aa).

The Cytoplasmic segment spans residues 1–71 (MTKCRRRRLH…STKYTLASFI (71 aa)). The helical transmembrane segment at 72 to 93 (PKSLFEQFRRVANFYFLVTGVL) threads the bilayer. The Extracellular portion of the chain corresponds to 94 to 97 (SLTA). A helical membrane pass occupies residues 98 to 120 (LSPYSPISALLPLTFVIAASMVK). Over 121–303 (EAIEDWGRKK…SRIERKMDKI (183 aa)) the chain is Cytoplasmic. The chain crosses the membrane as a helical span at residues 304–325 (IYLMFGVVFLMSFIGSIVFGIE). Over 326-363 (TREDRVRNGGRTERWYLRPDNADIFFDPDRAPMAAVYH) the chain is Extracellular. A helical transmembrane segment spans residues 364 to 381 (FFTAVMLYSYFIPISLYV). The Cytoplasmic portion of the chain corresponds to 382-921 (SIEIVKVLQS…HGHWCYSRIS (540 aa)). Aspartate 429 acts as the 4-aspartylphosphate intermediate in catalysis. Mg(2+) is bound by residues aspartate 866 and aspartate 870. Residues 922-941 (SMICYFFYKNITFGVTVFLY) form a helical membrane-spanning segment. Residues 942–955 (EAYTSFSAQPAYND) lie on the Extracellular side of the membrane. Residues 956–975 (WFLSLFNVFFSSLPVIALGV) traverse the membrane as a helical segment. At 976-1005 (FDQDVSARYCYKFPLLYQEGVQNLLFSWKR) the chain is on the cytoplasmic side. A helical membrane pass occupies residues 1006–1028 (IIGWMFNGVFTALAIFFLCKESL). At 1029 to 1041 (KHQLYNPNGKTAG) the chain is on the extracellular side. The chain crosses the membrane as a helical span at residues 1042-1064 (REILGGTMYTCVVWVVNLQMALA). At 1065–1070 (ISYFTW) the chain is on the cytoplasmic side. The chain crosses the membrane as a helical span at residues 1071 to 1091 (LQHIVIWGSVAFWYIFLMIYG). Over 1092–1108 (AITPSFSTDAYKVFIEA) the chain is Extracellular. A helical transmembrane segment spans residues 1109–1133 (LAPAPSYWLTTLFVMFFALIPFFVF). Over 1134 to 1203 (KSVQMRFFPG…DQLNKNFIAF (70 aa)) the chain is Cytoplasmic.

Belongs to the cation transport ATPase (P-type) (TC 3.A.3) family. Type IV subfamily.

It is found in the membrane. It catalyses the reaction ATP + H2O + phospholipidSide 1 = ADP + phosphate + phospholipidSide 2.. Involved in transport of phospholipids. In Arabidopsis thaliana (Mouse-ear cress), this protein is Probable phospholipid-transporting ATPase 11.